A 250-amino-acid chain; its full sequence is Testis-expressed protein 101 (250 aa).

A signal peptide spans 1-25 (MGACRIQYILLVFLLIASHWTLVQN). N-linked (GlcNAc...) asparagine glycans are attached at residues N45, N110, N134, and N160. One can recognise a UPAR/Ly6 domain in the interval 141–215 (CPTCLALEPC…VKETCSYQSF (75 aa)). G224 carries the GPI-anchor amidated glycine lipid modification. Residues 225–250 (ASWMPTSLWVLELLLPALSLPLIYFP) constitute a propeptide, removed in mature form.

In terms of assembly, interacts with VAMP3. Interacts with LY6K. Interacts with DPEP3; co-localized on the cell surface of spermatocytes, spermatids, and testicular spermatozoa, co-localized only in cytoplasmic droplets of caput and corpus epididymal sperm. Interacts with ADAM5. N-glycosylated; by high mannose and/or biantennary complex and/or certain types of hybrid oligosaccharides; possesses different oligosaccharides chains according to its subcellular localization in the testis. In terms of processing, sheds from membrane raft by ACE and released from the cell surface of epididymal sperm while it passes through the caput epididymis leading to disappearance of TEX101 on spermatozoa; is essential to produce fertile spermatozoa. In terms of tissue distribution, detected in testis.

It is found in the cell membrane. It localises to the membrane raft. The protein resides in the cytoplasmic vesicle. Its subcellular location is the secretory vesicle. The protein localises to the acrosome. It is found in the secreted. In terms of biological role, plays a role in fertilization by controlling binding of sperm to zona pellucida and migration of spermatozoa into the oviduct. May play a role in signal transduction and promote protein tyrosine phosphorylation. This is Testis-expressed protein 101 from Rattus norvegicus (Rat).